The following is a 647-amino-acid chain: DNA mismatch repair protein MutL (647 aa).

The disordered stretch occupies residues 377 to 396 (EEPQAVKQSAQLWQPPKQEW). The span at 387–396 (QLWQPPKQEW) shows a compositional bias: low complexity.

The protein belongs to the DNA mismatch repair MutL/HexB family.

Functionally, this protein is involved in the repair of mismatches in DNA. It is required for dam-dependent methyl-directed DNA mismatch repair. May act as a 'molecular matchmaker', a protein that promotes the formation of a stable complex between two or more DNA-binding proteins in an ATP-dependent manner without itself being part of a final effector complex. The polypeptide is DNA mismatch repair protein MutL (Bacillus cereus (strain AH187)).